Here is a 308-residue protein sequence, read N- to C-terminus: Aspartate carbamoyltransferase catalytic subunit (308 aa).

Arginine 59 and threonine 60 together coordinate carbamoyl phosphate. Lysine 87 serves as a coordination point for L-aspartate. Carbamoyl phosphate is bound by residues arginine 109, histidine 139, and glutamine 142. L-aspartate contacts are provided by arginine 172 and arginine 224. Residues alanine 265 and proline 266 each coordinate carbamoyl phosphate.

This sequence belongs to the aspartate/ornithine carbamoyltransferase superfamily. ATCase family. In terms of assembly, heterododecamer (2C3:3R2) of six catalytic PyrB chains organized as two trimers (C3), and six regulatory PyrI chains organized as three dimers (R2).

The catalysed reaction is carbamoyl phosphate + L-aspartate = N-carbamoyl-L-aspartate + phosphate + H(+). The protein operates within pyrimidine metabolism; UMP biosynthesis via de novo pathway; (S)-dihydroorotate from bicarbonate: step 2/3. Catalyzes the condensation of carbamoyl phosphate and aspartate to form carbamoyl aspartate and inorganic phosphate, the committed step in the de novo pyrimidine nucleotide biosynthesis pathway. The sequence is that of Aspartate carbamoyltransferase catalytic subunit from Enterococcus faecalis (strain ATCC 700802 / V583).